Consider the following 180-residue polypeptide: Small ribosomal subunit protein uS5 (180 aa).

Positions 1–20 (MAKMQGRMQGKVAPGDDRGD) are disordered. An S5 DRBM domain is found at 22–85 (LKEKMVAINR…DEARRKMIKV (64 aa)).

It belongs to the universal ribosomal protein uS5 family. Part of the 30S ribosomal subunit. Contacts proteins S4 and S8.

In terms of biological role, with S4 and S12 plays an important role in translational accuracy. Located at the back of the 30S subunit body where it stabilizes the conformation of the head with respect to the body. The chain is Small ribosomal subunit protein uS5 from Nitrosospira multiformis (strain ATCC 25196 / NCIMB 11849 / C 71).